The primary structure comprises 142 residues: Small ribosomal subunit protein uS12 (142 aa).

It belongs to the universal ribosomal protein uS12 family. In terms of assembly, part of the 30S ribosomal subunit.

Its function is as follows. With S4 and S5 plays an important role in translational accuracy. Located at the interface of the 30S and 50S subunits. This chain is Small ribosomal subunit protein uS12, found in Methanococcoides burtonii (strain DSM 6242 / NBRC 107633 / OCM 468 / ACE-M).